Reading from the N-terminus, the 550-residue chain is Mycosin-2 (550 aa).

A signal peptide spans 1 to 33 (MASPLNRPGLRAAAASAALTLVALSANVPAAQA). The tract at residues 34–62 (IPPPSVDPAMVPADARPGPDQPMRRSNSC) is disordered. The Peptidase S8 domain occupies 79 to 490 (GFNLVNISKA…YGLVDPVAAL (412 aa)). Catalysis depends on charge relay system residues aspartate 103 and histidine 133. Pro residues predominate over residues 168 to 190 (PPVTAAPAPPVEVPPPMPPPPPV). Residues 168 to 236 (PPVTAAPAPP…PPPPPGAPDG (69 aa)) form a disordered region. The active-site Charge relay system is the serine 435. Residues 524–544 (NIAIGFVGAVATGVLAMAIGA) traverse the membrane as a helical segment.

It belongs to the peptidase S8 family.

The protein resides in the cell membrane. The polypeptide is Mycosin-2 (Mycobacterium tuberculosis (strain ATCC 25618 / H37Rv)).